The following is a 231-amino-acid chain: Orotidine 5'-phosphate decarboxylase (231 aa).

Substrate is bound by residues Asp-11, Lys-34, Asp-61 to Thr-70, Thr-117, Arg-179, Gln-188, Gly-208, and Arg-209. The Proton donor role is filled by Lys-63.

The protein belongs to the OMP decarboxylase family. Type 1 subfamily. Homodimer.

The catalysed reaction is orotidine 5'-phosphate + H(+) = UMP + CO2. It functions in the pathway pyrimidine metabolism; UMP biosynthesis via de novo pathway; UMP from orotate: step 2/2. In terms of biological role, catalyzes the decarboxylation of orotidine 5'-monophosphate (OMP) to uridine 5'-monophosphate (UMP). The polypeptide is Orotidine 5'-phosphate decarboxylase (Streptococcus thermophilus (strain CNRZ 1066)).